A 352-amino-acid chain; its full sequence is MSLIEIDGSYGEGGGQILRTAVGMSALTGEPVRIYNIRANRPRPGLSHQHLHAVKAVAEICDAECEGLEIGSTEIVFEPGKVKGGEYEVDIGTAGSVTLLLQAVKLAAIAADGPVEMEVRGGTDVKWSPPVDYEINVNAHYLDRLGYRYELEVLRRGHYPRGGGIVRARMEPPKRLKPLEAVKFGELESVRGISHCVRLPPHVAERQAKAASEIIERELGIRPEIEIETYPKGRDPHLGPGSGIVLWAEDDQGNRIGADALGEKGKPAEVVGREAAEQLVQRLRTGMALDEHMGDQILPFLAIADGESVFGVTGVDPHLPTNAWVVEKFLPVSVEIRGKEGEPATVEVRPEG.

ATP-binding positions include Gln-102 and 292–296 (HMGDQ). His-318 (tele-AMP-histidine intermediate) is an active-site residue.

This sequence belongs to the RNA 3'-terminal cyclase family. Type 1 subfamily.

It localises to the cytoplasm. The enzyme catalyses a 3'-end 3'-phospho-ribonucleotide-RNA + ATP = a 3'-end 2',3'-cyclophospho-ribonucleotide-RNA + AMP + diphosphate. Its function is as follows. Catalyzes the conversion of 3'-phosphate to a 2',3'-cyclic phosphodiester at the end of RNA. The mechanism of action of the enzyme occurs in 3 steps: (A) adenylation of the enzyme by ATP; (B) transfer of adenylate to an RNA-N3'P to produce RNA-N3'PP5'A; (C) and attack of the adjacent 2'-hydroxyl on the 3'-phosphorus in the diester linkage to produce the cyclic end product. The biological role of this enzyme is unknown but it is likely to function in some aspects of cellular RNA processing. This Methanopyrus kandleri (strain AV19 / DSM 6324 / JCM 9639 / NBRC 100938) protein is RNA 3'-terminal phosphate cyclase.